We begin with the raw amino-acid sequence, 95 residues long: uncharacterized protein (95 aa).

A run of 3 helical transmembrane segments spans residues 3 to 23 (YTVL…GFSF), 35 to 55 (ILFL…MMLT), and 63 to 83 (MLGV…VMII).

It localises to the cell membrane. This is an uncharacterized protein from Mycoplasma pneumoniae (strain ATCC 29342 / M129 / Subtype 1) (Mycoplasmoides pneumoniae).